The following is a 315-amino-acid chain: HVA22-like protein h (315 aa).

The segment at 148–315 (PKPKPKEKKQ…RKARSAGAPR (168 aa)) is disordered. Residues 173 to 190 (ATSQAASSNPQVRLQSKK) show a composition bias toward polar residues. The segment covering 234 to 248 (PPGPPPPPPPPPPSP) has biased composition (pro residues).

Belongs to the DP1 family.

The protein is HVA22-like protein h (HVA22H) of Arabidopsis thaliana (Mouse-ear cress).